Reading from the N-terminus, the 302-residue chain is Tyrosine--tRNA ligase 2 (302 aa).

Tyr33 contributes to the L-tyrosine binding site. Positions 38-47 (PTADSLHLGH) match the 'HIGH' region motif. Residues Tyr160 and Gln164 each contribute to the L-tyrosine site. Residues 220–224 (KFGKS) carry the 'KMSKS' region motif. Residue Lys223 participates in ATP binding.

The protein belongs to the class-I aminoacyl-tRNA synthetase family. TyrS type 1 subfamily. As to quaternary structure, homodimer.

It is found in the cytoplasm. The enzyme catalyses tRNA(Tyr) + L-tyrosine + ATP = L-tyrosyl-tRNA(Tyr) + AMP + diphosphate + H(+). Its function is as follows. Catalyzes the attachment of tyrosine to tRNA(Tyr) in a two-step reaction: tyrosine is first activated by ATP to form Tyr-AMP and then transferred to the acceptor end of tRNA(Tyr). The protein is Tyrosine--tRNA ligase 2 (tyrS2) of Streptococcus thermophilus (strain CNRZ 1066).